The primary structure comprises 423 residues: Glucose-1-phosphate adenylyltransferase (423 aa).

Alpha-D-glucose 1-phosphate-binding positions include Tyr98, Gly163, 178 to 179, and Ser189; that span reads EK.

It belongs to the bacterial/plant glucose-1-phosphate adenylyltransferase family. Homotetramer.

It carries out the reaction alpha-D-glucose 1-phosphate + ATP + H(+) = ADP-alpha-D-glucose + diphosphate. Its pathway is glycan biosynthesis; glycogen biosynthesis. Its function is as follows. Involved in the biosynthesis of ADP-glucose, a building block required for the elongation reactions to produce glycogen. Catalyzes the reaction between ATP and alpha-D-glucose 1-phosphate (G1P) to produce pyrophosphate and ADP-Glc. The chain is Glucose-1-phosphate adenylyltransferase from Thermotoga maritima (strain ATCC 43589 / DSM 3109 / JCM 10099 / NBRC 100826 / MSB8).